We begin with the raw amino-acid sequence, 153 residues long: Cyanate hydratase (153 aa).

Catalysis depends on residues arginine 88, glutamate 91, and serine 114.

It belongs to the cyanase family.

It carries out the reaction cyanate + hydrogencarbonate + 3 H(+) = NH4(+) + 2 CO2. Functionally, catalyzes the reaction of cyanate with bicarbonate to produce ammonia and carbon dioxide. The polypeptide is Cyanate hydratase (Mycolicibacterium vanbaalenii (strain DSM 7251 / JCM 13017 / BCRC 16820 / KCTC 9966 / NRRL B-24157 / PYR-1) (Mycobacterium vanbaalenii)).